Reading from the N-terminus, the 454-residue chain is tRNA modification GTPase MnmE (454 aa).

Residues arginine 23, glutamate 80, and lysine 120 each coordinate (6S)-5-formyl-5,6,7,8-tetrahydrofolate. A TrmE-type G domain is found at 216–377 (GMKVVIAGRP…LRNHLKQSMG (162 aa)). Residue asparagine 226 participates in K(+) binding. GTP contacts are provided by residues 226-231 (NAGKSS), 245-251 (TDIAGTT), 270-273 (DTAG), 335-338 (NKAD), and 358-360 (SAR). Residue serine 230 participates in Mg(2+) binding. Positions 245, 247, and 250 each coordinate K(+). Mg(2+) is bound at residue threonine 251. Lysine 454 contacts (6S)-5-formyl-5,6,7,8-tetrahydrofolate.

Belongs to the TRAFAC class TrmE-Era-EngA-EngB-Septin-like GTPase superfamily. TrmE GTPase family. Homodimer. Heterotetramer of two MnmE and two MnmG subunits. The cofactor is K(+).

It localises to the cytoplasm. Its function is as follows. Exhibits a very high intrinsic GTPase hydrolysis rate. Involved in the addition of a carboxymethylaminomethyl (cmnm) group at the wobble position (U34) of certain tRNAs, forming tRNA-cmnm(5)s(2)U34. The sequence is that of tRNA modification GTPase MnmE from Escherichia coli (strain SMS-3-5 / SECEC).